The sequence spans 260 residues: Large ribosomal subunit protein eL8A (260 aa).

Positions 1–34 are disordered; that stretch reads MPSSKKVAPAPLATKSKASTSTKNPLFESTPKNF.

It belongs to the eukaryotic ribosomal protein eL8 family. Component of the large ribosomal subunit. Mature ribosomes consist of a small (40S) and a large (60S) subunit. The 40S subunit contains about 32 different proteins and 1 molecule of RNA (18S). The 60S subunit contains 45 different proteins and 3 molecules of RNA (25S, 5.8S and 5S).

The protein resides in the cytoplasm. Functionally, component of the ribosome, a large ribonucleoprotein complex responsible for the synthesis of proteins in the cell. The small ribosomal subunit (SSU) binds messenger RNAs (mRNAs) and translates the encoded message by selecting cognate aminoacyl-transfer RNA (tRNA) molecules. The large subunit (LSU) contains the ribosomal catalytic site termed the peptidyl transferase center (PTC), which catalyzes the formation of peptide bonds, thereby polymerizing the amino acids delivered by tRNAs into a polypeptide chain. The nascent polypeptides leave the ribosome through a tunnel in the LSU and interact with protein factors that function in enzymatic processing, targeting, and the membrane insertion of nascent chains at the exit of the ribosomal tunnel. In Candida albicans (strain SC5314 / ATCC MYA-2876) (Yeast), this protein is Large ribosomal subunit protein eL8A.